Consider the following 65-residue polypeptide: Large ribosomal subunit protein bL33c (65 aa).

The protein belongs to the bacterial ribosomal protein bL33 family.

The protein localises to the plastid. Its subcellular location is the chloroplast. The sequence is that of Large ribosomal subunit protein bL33c from Pyropia yezoensis (Susabi-nori).